The sequence spans 178 residues: Cytochrome b6-f complex iron-sulfur subunit (178 aa).

The helical transmembrane segment at 20–42 threads the bilayer; the sequence is LLTFGSVTGVALGALYPVVNYFI. A Rieske domain is found at 65-161; it reads ATGWLSSHPE…VSVENDNVFV (97 aa). [2Fe-2S] cluster is bound by residues cysteine 107, histidine 109, cysteine 125, and histidine 128. Cysteine 112 and cysteine 127 are joined by a disulfide.

It belongs to the Rieske iron-sulfur protein family. As to quaternary structure, the 4 large subunits of the cytochrome b6-f complex are cytochrome b6, subunit IV (17 kDa polypeptide, PetD), cytochrome f and the Rieske protein, while the 4 small subunits are PetG, PetL, PetM and PetN. The complex functions as a dimer. The cofactor is [2Fe-2S] cluster.

The protein resides in the cellular thylakoid membrane. It carries out the reaction 2 oxidized [plastocyanin] + a plastoquinol + 2 H(+)(in) = 2 reduced [plastocyanin] + a plastoquinone + 4 H(+)(out). Functionally, component of the cytochrome b6-f complex, which mediates electron transfer between photosystem II (PSII) and photosystem I (PSI), cyclic electron flow around PSI, and state transitions. This is Cytochrome b6-f complex iron-sulfur subunit from Parasynechococcus marenigrum (strain WH8102).